The sequence spans 154 residues: Xanthine-guanine phosphoribosyltransferase (154 aa).

5-phospho-alpha-D-ribose 1-diphosphate is bound by residues 37-38 (RG), arginine 69, and 88-96 (EDLVDSGDT). GMP is bound at residue arginine 69. Aspartate 89 is a binding site for Mg(2+). Positions 92 and 135 each coordinate guanine. The xanthine site is built by aspartate 92 and isoleucine 135. Residues 92–96 (DSGDT) and 134–135 (WI) contribute to the GMP site.

The protein belongs to the purine/pyrimidine phosphoribosyltransferase family. XGPT subfamily. As to quaternary structure, homotetramer. The cofactor is Mg(2+).

The protein resides in the cell inner membrane. The catalysed reaction is GMP + diphosphate = guanine + 5-phospho-alpha-D-ribose 1-diphosphate. The enzyme catalyses XMP + diphosphate = xanthine + 5-phospho-alpha-D-ribose 1-diphosphate. It carries out the reaction IMP + diphosphate = hypoxanthine + 5-phospho-alpha-D-ribose 1-diphosphate. The protein operates within purine metabolism; GMP biosynthesis via salvage pathway; GMP from guanine: step 1/1. It participates in purine metabolism; XMP biosynthesis via salvage pathway; XMP from xanthine: step 1/1. Functionally, purine salvage pathway enzyme that catalyzes the transfer of the ribosyl-5-phosphate group from 5-phospho-alpha-D-ribose 1-diphosphate (PRPP) to the N9 position of the 6-oxopurines guanine and xanthine to form the corresponding ribonucleotides GMP (guanosine 5'-monophosphate) and XMP (xanthosine 5'-monophosphate), with the release of PPi. To a lesser extent, also acts on hypoxanthine. This chain is Xanthine-guanine phosphoribosyltransferase, found in Vibrio atlanticus (strain LGP32) (Vibrio splendidus (strain Mel32)).